Reading from the N-terminus, the 166-residue chain is Large ribosomal subunit protein uL10 (166 aa).

This sequence belongs to the universal ribosomal protein uL10 family. As to quaternary structure, part of the ribosomal stalk of the 50S ribosomal subunit. The N-terminus interacts with L11 and the large rRNA to form the base of the stalk. The C-terminus forms an elongated spine to which L12 dimers bind in a sequential fashion forming a multimeric L10(L12)X complex.

Functionally, forms part of the ribosomal stalk, playing a central role in the interaction of the ribosome with GTP-bound translation factors. The polypeptide is Large ribosomal subunit protein uL10 (Shewanella woodyi (strain ATCC 51908 / MS32)).